Consider the following 277-residue polypeptide: Shikimate dehydrogenase (NADP(+)) (277 aa).

Shikimate contacts are provided by residues 15–17 and Thr-62; that span reads SKS. Residue Lys-66 is the Proton acceptor of the active site. An NADP(+)-binding site is contributed by Glu-78. Shikimate is bound by residues Asn-87 and Asp-103. Residues 127–131, 151–156, and Gly-238 contribute to the NADP(+) site; these read GAGGA and NRTHEK.

It belongs to the shikimate dehydrogenase family. In terms of assembly, homodimer.

It carries out the reaction shikimate + NADP(+) = 3-dehydroshikimate + NADPH + H(+). Its pathway is metabolic intermediate biosynthesis; chorismate biosynthesis; chorismate from D-erythrose 4-phosphate and phosphoenolpyruvate: step 4/7. Functionally, involved in the biosynthesis of the chorismate, which leads to the biosynthesis of aromatic amino acids. Catalyzes the reversible NADPH linked reduction of 3-dehydroshikimate (DHSA) to yield shikimate (SA). In Shewanella frigidimarina (strain NCIMB 400), this protein is Shikimate dehydrogenase (NADP(+)).